A 777-amino-acid polypeptide reads, in one-letter code: DnaJ homolog subfamily C member 16 (777 aa).

Positions 1–23 (MELGRAGPAGLLLLLLLLLAAQA) are cleaved as a signal peptide. Over 24–531 (APERDPYRVL…DSLFHSNWRE (508 aa)) the chain is Cytoplasmic. One can recognise a J domain in the interval 28-92 (DPYRVLGVGR…EKRANFDRYG (65 aa)). The Thioredoxin domain maps to 117–243 (FDESFFHFPF…LRQFVENLLP (127 aa)). The helical; Anchor for type IV membrane protein transmembrane segment at 532–552 (MMPLLSLLFSALFILFGTVIV) threads the bilayer. Topologically, residues 553 to 777 (QAFSDSSDTR…FYIPSWPALD (225 aa)) are extracellular. The segment at 558-589 (SSDTRDSPASEKKDTTAKTEKNDTSFNKESNS) is disordered. Over residues 559–580 (SDTRDSPASEKKDTTAKTEKND) the composition is skewed to basic and acidic residues. N-linked (GlcNAc...) asparagine glycosylation is present at Asn627.

Its subcellular location is the endoplasmic reticulum membrane. In terms of biological role, plays an important role in regulating the size of autophagosomes during the formation process. The polypeptide is DnaJ homolog subfamily C member 16 (DNAJC16) (Gallus gallus (Chicken)).